The chain runs to 449 residues: Trigger factor (449 aa).

The PPIase FKBP-type domain occupies 173-258 (GDRVTLDFVG…LKKVEWAHLP (86 aa)).

The protein belongs to the FKBP-type PPIase family. Tig subfamily.

It localises to the cytoplasm. It catalyses the reaction [protein]-peptidylproline (omega=180) = [protein]-peptidylproline (omega=0). Functionally, involved in protein export. Acts as a chaperone by maintaining the newly synthesized protein in an open conformation. Functions as a peptidyl-prolyl cis-trans isomerase. This chain is Trigger factor, found in Cupriavidus metallidurans (strain ATCC 43123 / DSM 2839 / NBRC 102507 / CH34) (Ralstonia metallidurans).